A 1162-amino-acid chain; its full sequence is MLVTPLLLVTLLCALCSAALYDSSSYVYYYQSAFRPPDGWHLHGGAYAVVNISSESNNAGSSSGCTVGTIHGGRVVNASSIAMTAPSSGMAWSSSQFCTAYCNFSDTTVFVTHCYKHGGCPITGMLQQHSIRVSAMKNGQLFYNLTVSVAKYPTFKSFQCVNNLTSVYLNGDLVYTSNETTDVTSAGVYFKAVGPITYKVMREVRALAYFVNGTAQDVILCDGSPRGLLACQYNTGNFSDGFYPFTNSSLVKQKFIVYRENSVNTTFTLHNFTFHNETGANPNPSGVQNIQTYQTQTAQSGYYNFNFSFLSSFVYKESNFMYGSYHPSCSFRLETINNGLWFNSLSVSIAYGPLQGGCKQSVFSGRATCCYAYSYGGPLLCKGVYSGELDHNFECGLLVYVTKSGGSRIQTATEPPVITQHNYNNITLNTCVDYNIYGRIGQGFITNVTDSAVSYNYLADAGLAILDTSGSIDIFVVQSEYGLNYYKVNPCEDVNQQFVVSGGKLVGILTSRNETGSQLLENQFYIKITNGTRRFRRSITESVENCPYVSYGKFCIKPDGSISTIVPKYLEQFVAPLLNVTENVLIPNSFNLTVTDEYIQTRMDKVQINCLQYICGNSLECRNLFQQYGPVCDNMLSVVNSVGQKEDMELLNFYSSTKPAGFNTPVLSNVSTGEFNISLFLTTPSSPRRRSFIEDLLFTSVESVGLPTDDAYKNCTAGPLGFLKDLVCAREYNGLLVLPPIITAEMQTLYTSSLVASMAFGGITAAGAIPFATQLQARINHLGITQSLLLKNQEKIAASFNKAIGHMQEGFRSTSLALQQIQDVVNKQSAILTETMASLNKNFGAISSVIQEIYLQLDAIQANAQVDRLITGRLSSLSVLASAKQAEYIRVSQQRELATQKINECVKSQSTRYSFCGNGRHVLTIPQNAPNGIVFIHFTYTPESFVNVTAIVGFCVKPNNASQYAIVPVNGRGIFIQVNDSYYITARDMYMPRHITAGDIVTLTSCQANYVSVNKTVITTFVENDDFDFDDELSKWWIETKYELPDFDQFNYTIPVLNITYDIDKIEEVIKGLNDSLIDLETLSILKTYIKWPWYVWLAIAFATIIFILILGWVFFMTGCCGCCCGCFGIIPLMSKCGKKSSYYTTFDNDVVTEQYRPKKSV.

The signal sequence occupies residues 1-18 (MLVTPLLLVTLLCALCSA). The Extracellular segment spans residues 19–1095 (ALYDSSSYVY…LKTYIKWPWY (1077 aa)). N-linked (GlcNAc...) asparagine; by host glycosylation is found at Asn-51, Asn-77, Asn-103, Asn-144, Asn-163, Asn-178, Asn-212, Asn-237, Asn-247, Asn-264, Asn-271, Asn-276, Asn-306, Asn-425, Asn-447, Asn-513, Asn-530, Asn-579, Asn-591, Asn-669, Asn-676, and Asn-714. Positions 769–874 (IPFATQLQAR…QVDRLITGRL (106 aa)) are heptad repeat 1 (HR1). Residues 822–866 (QDVVNKQSAILTETMASLNKNFGAISSVIQEIYLQLDAIQANAQV) adopt a coiled-coil conformation. Residues Asn-947, Asn-960, Asn-979, Asn-1014, Asn-1051, Asn-1058, and Asn-1074 are each glycosylated (N-linked (GlcNAc...) asparagine; by host). The interval 1024–1105 (NDDFDFDDEL…VWLAIAFATI (82 aa)) is heptad repeat 2 (HR2). The stretch at 1055–1083 (PVLNITYDIDKIEEVIKGLNDSLIDLETL) forms a coiled coil. A helical membrane pass occupies residues 1096–1116 (VWLAIAFATIIFILILGWVFF). At 1117-1162 (MTGCCGCCCGCFGIIPLMSKCGKKSSYYTTFDNDVVTEQYRPKKSV) the chain is on the cytoplasmic side. Residues 1159-1162 (KKSV) carry the Di-lysine motif motif.

This sequence belongs to the gammacoronaviruses spike protein family. As to quaternary structure, homotrimer; each monomer consists of a S1 and a S2 subunit. The resulting peplomers protrude from the virus surface as spikes. Post-translationally, specific enzymatic cleavages in vivo yield mature proteins. The precursor is processed into S1 and S2 by host cell furin or furin-like protease to yield the mature S1 and S2 proteins. The cleavage site between S1 and S2 requires the optimal sequence [KR]-X-[KR]-R. Additionally, a second cleavage leads to the release of a fusion peptide after viral attachment to host cell receptor.

Its subcellular location is the virion membrane. It is found in the host endoplasmic reticulum-Golgi intermediate compartment membrane. Functionally, attaches the virion to the host cell membrane by interacting with sialic acids, initiating the infection. Mediates fusion of the virion and cellular membranes by acting as a class I viral fusion protein. Under the current model, the protein has at least 3 conformational states: pre-fusion native state, pre-hairpin intermediate state, and post-fusion hairpin state. During viral and target cell membrane fusion, the coiled coil regions (heptad repeats) assume a trimer-of-hairpins structure, positioning the fusion peptide in close proximity to the C-terminal region of the ectodomain. The formation of this structure appears to drive apposition and subsequent fusion of viral and target cell membranes. Its function is as follows. Acts as a viral fusion peptide after S2 cleavage occurring upon virus endocytosis. This Avian infectious bronchitis virus (strain KB8523) (IBV) protein is Spike glycoprotein.